Consider the following 148-residue polypeptide: uncharacterized protein (148 aa).

The first 20 residues, Met1–Ala20, serve as a signal peptide directing secretion.

This is an uncharacterized protein from Haemophilus influenzae (strain ATCC 51907 / DSM 11121 / KW20 / Rd).